The primary structure comprises 674 residues: DNA ligase (674 aa).

NAD(+) contacts are provided by residues 35–39 (DYDFD), 84–85 (SL), and E118. Catalysis depends on K120, which acts as the N6-AMP-lysine intermediate. The NAD(+) site is built by R141, E184, K297, and K321. 4 residues coordinate Zn(2+): C415, C418, C433, and C439. Residues 598–674 (LVNTNFEGLT…ITEDEFDALL (77 aa)) form the BRCT domain.

Belongs to the NAD-dependent DNA ligase family. LigA subfamily. Mg(2+) is required as a cofactor. Mn(2+) serves as cofactor.

It catalyses the reaction NAD(+) + (deoxyribonucleotide)n-3'-hydroxyl + 5'-phospho-(deoxyribonucleotide)m = (deoxyribonucleotide)n+m + AMP + beta-nicotinamide D-nucleotide.. Its function is as follows. DNA ligase that catalyzes the formation of phosphodiester linkages between 5'-phosphoryl and 3'-hydroxyl groups in double-stranded DNA using NAD as a coenzyme and as the energy source for the reaction. It is essential for DNA replication and repair of damaged DNA. The sequence is that of DNA ligase from Chlorobium phaeovibrioides (strain DSM 265 / 1930) (Prosthecochloris vibrioformis (strain DSM 265)).